Reading from the N-terminus, the 145-residue chain is D-aminoacyl-tRNA deacylase (145 aa).

Residues 137 to 138 (GP) carry the Gly-cisPro motif, important for rejection of L-amino acids motif.

The protein belongs to the DTD family. As to quaternary structure, homodimer.

It localises to the cytoplasm. The enzyme catalyses glycyl-tRNA(Ala) + H2O = tRNA(Ala) + glycine + H(+). It catalyses the reaction a D-aminoacyl-tRNA + H2O = a tRNA + a D-alpha-amino acid + H(+). Its function is as follows. An aminoacyl-tRNA editing enzyme that deacylates mischarged D-aminoacyl-tRNAs. Also deacylates mischarged glycyl-tRNA(Ala), protecting cells against glycine mischarging by AlaRS. Acts via tRNA-based rather than protein-based catalysis; rejects L-amino acids rather than detecting D-amino acids in the active site. By recycling D-aminoacyl-tRNA to D-amino acids and free tRNA molecules, this enzyme counteracts the toxicity associated with the formation of D-aminoacyl-tRNA entities in vivo and helps enforce protein L-homochirality. In Exiguobacterium sibiricum (strain DSM 17290 / CCUG 55495 / CIP 109462 / JCM 13490 / 255-15), this protein is D-aminoacyl-tRNA deacylase.